Here is a 497-residue protein sequence, read N- to C-terminus: Cysteine--tRNA ligase (497 aa).

Residue Cys32 participates in Zn(2+) binding. The 'HIGH' region signature appears at 34–44; sequence PTVYGEGHLGH. Residues Cys228, His253, and Glu257 each contribute to the Zn(2+) site. A 'KMSKS' region motif is present at residues 285–289; the sequence is KMGKS. Lys288 contributes to the ATP binding site.

This sequence belongs to the class-I aminoacyl-tRNA synthetase family. In terms of assembly, monomer. Requires Zn(2+) as cofactor.

The protein resides in the cytoplasm. It catalyses the reaction tRNA(Cys) + L-cysteine + ATP = L-cysteinyl-tRNA(Cys) + AMP + diphosphate. The polypeptide is Cysteine--tRNA ligase (Cytophaga hutchinsonii (strain ATCC 33406 / DSM 1761 / CIP 103989 / NBRC 15051 / NCIMB 9469 / D465)).